The primary structure comprises 181 residues: Peptide deformylase (181 aa).

Residues cysteine 99 and histidine 141 each coordinate Fe cation. The active site involves glutamate 142. Histidine 145 serves as a coordination point for Fe cation.

It belongs to the polypeptide deformylase family. It depends on Fe(2+) as a cofactor.

It catalyses the reaction N-terminal N-formyl-L-methionyl-[peptide] + H2O = N-terminal L-methionyl-[peptide] + formate. Removes the formyl group from the N-terminal Met of newly synthesized proteins. Requires at least a dipeptide for an efficient rate of reaction. N-terminal L-methionine is a prerequisite for activity but the enzyme has broad specificity at other positions. This is Peptide deformylase from Chlamydia trachomatis serovar A (strain ATCC VR-571B / DSM 19440 / HAR-13).